Reading from the N-terminus, the 314-residue chain is 4-hydroxy-3-methylbut-2-enyl diphosphate reductase (314 aa).

Cys-12 lines the [4Fe-4S] cluster pocket. Positions 41 and 74 each coordinate (2E)-4-hydroxy-3-methylbut-2-enyl diphosphate. 2 residues coordinate dimethylallyl diphosphate: His-41 and His-74. Isopentenyl diphosphate-binding residues include His-41 and His-74. Residue Cys-96 participates in [4Fe-4S] cluster binding. Residue His-124 participates in (2E)-4-hydroxy-3-methylbut-2-enyl diphosphate binding. Position 124 (His-124) interacts with dimethylallyl diphosphate. Residue His-124 coordinates isopentenyl diphosphate. Glu-126 serves as the catalytic Proton donor. Thr-167 serves as a coordination point for (2E)-4-hydroxy-3-methylbut-2-enyl diphosphate. Cys-197 serves as a coordination point for [4Fe-4S] cluster. Positions 225, 226, 227, and 269 each coordinate (2E)-4-hydroxy-3-methylbut-2-enyl diphosphate. Residues Ser-225, Ser-226, Asn-227, and Ser-269 each coordinate dimethylallyl diphosphate. Ser-225, Ser-226, Asn-227, and Ser-269 together coordinate isopentenyl diphosphate.

The protein belongs to the IspH family. [4Fe-4S] cluster serves as cofactor.

It carries out the reaction isopentenyl diphosphate + 2 oxidized [2Fe-2S]-[ferredoxin] + H2O = (2E)-4-hydroxy-3-methylbut-2-enyl diphosphate + 2 reduced [2Fe-2S]-[ferredoxin] + 2 H(+). The enzyme catalyses dimethylallyl diphosphate + 2 oxidized [2Fe-2S]-[ferredoxin] + H2O = (2E)-4-hydroxy-3-methylbut-2-enyl diphosphate + 2 reduced [2Fe-2S]-[ferredoxin] + 2 H(+). Its pathway is isoprenoid biosynthesis; dimethylallyl diphosphate biosynthesis; dimethylallyl diphosphate from (2E)-4-hydroxy-3-methylbutenyl diphosphate: step 1/1. The protein operates within isoprenoid biosynthesis; isopentenyl diphosphate biosynthesis via DXP pathway; isopentenyl diphosphate from 1-deoxy-D-xylulose 5-phosphate: step 6/6. In terms of biological role, catalyzes the conversion of 1-hydroxy-2-methyl-2-(E)-butenyl 4-diphosphate (HMBPP) into a mixture of isopentenyl diphosphate (IPP) and dimethylallyl diphosphate (DMAPP). Acts in the terminal step of the DOXP/MEP pathway for isoprenoid precursor biosynthesis. The chain is 4-hydroxy-3-methylbut-2-enyl diphosphate reductase from Psychromonas ingrahamii (strain DSM 17664 / CCUG 51855 / 37).